The sequence spans 210 residues: Guanylate kinase (210 aa).

One can recognise a Guanylate kinase-like domain in the interval 23–203; sequence GRVVVLSGPS…ACAELVSLLV (181 aa). 30 to 37 serves as a coordination point for ATP; that stretch reads GPSAVGKS.

Belongs to the guanylate kinase family.

The protein localises to the cytoplasm. It carries out the reaction GMP + ATP = GDP + ADP. Essential for recycling GMP and indirectly, cGMP. This chain is Guanylate kinase (gmk), found in Mycobacterium leprae (strain TN).